Consider the following 1013-residue polypeptide: Dichlorochromopyrrolate synthase (1013 aa).

The protein belongs to the RebD family. Homodimer. The cofactor is heme.

The enzyme catalyses 2 3-(7-chloroindol-3-yl)-2-iminopropanoate + H2O2 = dichlorochromopyrrolate + NH4(+) + 2 H2O + H(+). It catalyses the reaction 2 2-iminio-3-(indol-3-yl)propanoate + H2O2 = chromopyrrolate + NH4(+) + 2 H2O + H(+). The catalysed reaction is 2 H2O2 = O2 + 2 H2O. In terms of biological role, involved in the biosynthesis of the indolocarbazole antitumor agent rebeccamycin. Catalyzes the hydrogen peroxide-dependent dimerization of two L-tryptophan-derived molecules (imine form of indole 3-pyruvate (IPA)), to form dichlorochromopyrrolic acid (CPA), the precursor for the six-ring bisindolopyrrolocarbazole scaffold of the rebeccamycin. The hydrogen peroxide is provided together with iminoindolpropanoate by RebO. Due to the instability of indole 3-pyruvate (IPA), which is hydrolyzed in solution and exits in equilibrium with the predominant ketone form of IPA, the concerted functioning of the RebO/RebD system appears to prevent the buildup of significant amounts of IPA and its imine in solution, effectively shepherding the imine further down the biosynthetic chain. In Lentzea aerocolonigenes (Lechevalieria aerocolonigenes), this protein is Dichlorochromopyrrolate synthase (rebD).